The chain runs to 875 residues: Leucine--tRNA ligase (875 aa).

Over residues 1 to 20 (MPSAGSVNAANPAVDTSAQT) the composition is skewed to polar residues. The segment at 1–22 (MPSAGSVNAANPAVDTSAQTGR) is disordered. Positions 60 to 70 (PYPSGSLHMGH) match the 'HIGH' region motif. The 'KMSKS' region signature appears at 634-638 (KMSKS). Lys-637 serves as a coordination point for ATP.

Belongs to the class-I aminoacyl-tRNA synthetase family.

The protein localises to the cytoplasm. The enzyme catalyses tRNA(Leu) + L-leucine + ATP = L-leucyl-tRNA(Leu) + AMP + diphosphate. This chain is Leucine--tRNA ligase, found in Synechococcus sp. (strain CC9605).